Here is a 395-residue protein sequence, read N- to C-terminus: Putative nickel insertion protein (395 aa).

Belongs to the LarC family.

The chain is Putative nickel insertion protein from Roseiflexus castenholzii (strain DSM 13941 / HLO8).